The following is a 410-amino-acid chain: Mating-type locus allele B6 protein (410 aa).

Residues 1-110 (MSRDPKLSLS…VNVASPAVEY (110 aa)) are variable domain between B alleles. The homeobox; TALE-type DNA-binding region spans 107-184 (AVEYRNLSED…NARRRSGWSH (78 aa)). Residues 111–410 (RNLSEDLPAY…PFFCLSIAFV (300 aa)) are highly conserved between B alleles. 3 disordered regions span residues 202 to 224 (RAKL…PSDD), 278 to 335 (TPKP…TPEL), and 373 to 393 (KARG…QQPD). A compositionally biased stretch (polar residues) spans 205–219 (LSSSNQSTPPSLTSE). The Nuclear localization signal signature appears at 276–308 (KKTPKPGMPRPVTTVAKRQPARKTKPAAKPKSR). A compositionally biased stretch (basic residues) spans 294–307 (QPARKTKPAAKPKS). Polar residues predominate over residues 312–335 (PRASTTPSIDSTLDSSKLESTPEL). The segment at 333-410 (PELSMCSTAD…PFFCLSIAFV (78 aa)) is not essential for B6 function. Positions 375 to 388 (RGNRKVKALPKRAG) are enriched in basic residues.

Belongs to the TALE/M-ATYP homeobox family.

The protein localises to the nucleus. Its function is as follows. The B locus has at least 25 alleles, and any combination of two different B alleles yields a multimeric regulatory protein, that activates genes responsible for the pathogenicity and for the sexual development of the fungus within the corn plant. The sequence is that of Mating-type locus allele B6 protein from Mycosarcoma maydis (Corn smut fungus).